The sequence spans 552 residues: Leiomodin-2 (552 aa).

The segment at 1–47 (MSTFGYRRELSKYEDIDEDELLASLTEEELKELERELEDIEPDRNLP) is interaction with tropomyosin alpha. Interaction with actin stretches follow at residues 1-169 (MSTF…SSHV) and 170-498 (RHKK…KEIK). Positions 13 to 46 (YEDIDEDELLASLTEEELKELERELEDIEPDRNL) form a coiled coil. Disordered stretches follow at residues 33–67 (LERE…FSRE), 87–191 (GACE…DGKD), and 364–531 (MDKQ…DNLM). Polar residues predominate over residues 51–64 (RQKSLTEKTPTGTF). The stretch at 86 to 151 (LGACEKDSEQ…DDEDEEKQNS (66 aa)) forms a coiled coil. 2 stretches are compositionally biased toward acidic residues: residues 93–108 (SEQE…EECF) and 115–147 (VSEE…EDEE). Residues 364–377 (MDKQRQKRMQEQRQ) are compositionally biased toward basic and acidic residues. Positions 398 to 415 (PRSSPYTSPKSSPWSSPK) are enriched in low complexity. Pro residues predominate over residues 425–450 (SQPPAPAPPPPPPPPPPPPPPPPPVI). Residues 478 to 488 (QKKKKGKKGKK) show a composition bias toward basic residues. Positions 489–513 (HENSILKEIKDSLKSVSDRKSEEGS) are enriched in basic and acidic residues. Positions 514 to 524 (RPSTRPSTPQR) are enriched in polar residues. Positions 526–545 (LHDNLMEAIRASSIKQLRRV) are interaction with actin 3. The WH2 domain occupies 526–545 (LHDNLMEAIRASSIKQLRRV).

This sequence belongs to the tropomodulin family. Can bind at least three actin monomers and thereby provides a nucleus for actin filament formation. Interacts (via N-terminus) with tropomyosin alpha (TPM1) (via N-terminus). May also interact with TPM2 (via N-terminus).

Its subcellular location is the cytoplasm. The protein localises to the myofibril. It localises to the sarcomere. It is found in the m line. The protein resides in the cytoskeleton. Its function is as follows. Mediates nucleation of actin filaments and thereby promotes actin polymerization. Plays a role in the regulation of actin filament length. Required for normal sarcomere organization in the heart, and for normal heart function. The chain is Leiomodin-2 (LMOD2) from Gallus gallus (Chicken).